The primary structure comprises 548 residues: Chaperonin GroEL (548 aa).

ATP-binding positions include 30 to 33 (TLGP), K51, 87 to 91 (DGTTT), G415, 479 to 481 (NAA), and D495.

Belongs to the chaperonin (HSP60) family. In terms of assembly, forms a cylinder of 14 subunits composed of two heptameric rings stacked back-to-back. Interacts with the co-chaperonin GroES.

Its subcellular location is the cytoplasm. The catalysed reaction is ATP + H2O + a folded polypeptide = ADP + phosphate + an unfolded polypeptide.. Functionally, together with its co-chaperonin GroES, plays an essential role in assisting protein folding. The GroEL-GroES system forms a nano-cage that allows encapsulation of the non-native substrate proteins and provides a physical environment optimized to promote and accelerate protein folding. The sequence is that of Chaperonin GroEL from Ectopseudomonas mendocina (strain ymp) (Pseudomonas mendocina).